The primary structure comprises 524 residues: Glutamyl-tRNA(Gln) amidotransferase subunit A, mitochondrial (524 aa).

Active-site charge relay system residues include Lys-76 and Ser-171. Ser-195 acts as the Acyl-ester intermediate in catalysis.

Belongs to the amidase family. GatA subfamily. In terms of assembly, subunit of the heterotrimeric GatCAB amidotransferase (AdT) complex, composed of A (qrsl1), B (gatb) and C (gatc) subunits.

It is found in the mitochondrion. The catalysed reaction is L-glutamyl-tRNA(Gln) + L-glutamine + ATP + H2O = L-glutaminyl-tRNA(Gln) + L-glutamate + ADP + phosphate + H(+). In terms of biological role, allows the formation of correctly charged Gln-tRNA(Gln) through the transamidation of misacylated Glu-tRNA(Gln) in the mitochondria. The reaction takes place in the presence of glutamine and ATP through an activated gamma-phospho-Glu-tRNA(Gln). This is Glutamyl-tRNA(Gln) amidotransferase subunit A, mitochondrial (qrsl1) from Xenopus laevis (African clawed frog).